We begin with the raw amino-acid sequence, 464 residues long: 3-isopropylmalate dehydratase large subunit (464 aa).

3 residues coordinate [4Fe-4S] cluster: C337, C397, and C400.

It belongs to the aconitase/IPM isomerase family. LeuC type 1 subfamily. In terms of assembly, heterodimer of LeuC and LeuD. [4Fe-4S] cluster is required as a cofactor.

The enzyme catalyses (2R,3S)-3-isopropylmalate = (2S)-2-isopropylmalate. It participates in amino-acid biosynthesis; L-leucine biosynthesis; L-leucine from 3-methyl-2-oxobutanoate: step 2/4. Its function is as follows. Catalyzes the isomerization between 2-isopropylmalate and 3-isopropylmalate, via the formation of 2-isopropylmaleate. The sequence is that of 3-isopropylmalate dehydratase large subunit from Bacillus thuringiensis subsp. konkukian (strain 97-27).